A 219-amino-acid chain; its full sequence is Aspartic protease inhibitor 10 (219 aa).

The N-terminal stretch at 1-23 (MMKCLFLLCLCLVPIVVFSSTFT) is a signal peptide. The propeptide occupies 24–32 (SQNLIDLPS). The Vacuolar targeting signal signature appears at 26 to 31 (NLIDLP). N-linked (GlcNAc...) asparagine glycosylation occurs at N51. Disulfide bonds link C80–C125 and C173–C184.

It belongs to the protease inhibitor I3 (leguminous Kunitz-type inhibitor) family. As to expression, in tubers and green buds of untreated plants. After abscisic acid treatment or mechanical wounding is mostly accumulated in leaves, to a lesser extent in stems, but not in roots.

Its function is as follows. Inhibitor of cathepsin D (aspartic protease) and trypsin (serine protease). Protects the plant by inhibiting proteases of invading organisms. This is Aspartic protease inhibitor 10 (CDI) from Solanum tuberosum (Potato).